A 450-amino-acid polypeptide reads, in one-letter code: IMP-specific 5'-nucleotidase 1 (450 aa).

Histidine 144 contributes to the ATP binding site. Aspartate 172 serves as the catalytic Nucleophile. IMP is bound by residues aspartate 172, aspartate 174, aspartate 180, threonine 208, aspartate 376, and lysine 384. Mg(2+)-binding residues include aspartate 172 and aspartate 174. Aspartate 174 acts as the Proton donor in catalysis. Aspartate 411 provides a ligand contact to Mg(2+).

Belongs to the ISN1 family. In terms of assembly, homotetramer. Mg(2+) is required as a cofactor.

It catalyses the reaction IMP + H2O = inosine + phosphate. Its activity is regulated as follows. Allosterically activated by ATP. ATP binding is a prerequisite to magnesium and substrate binding. ATP binds to 2 of the subunits in the homotetramer inducing a closure of these 2 subunits and the release of the C-terminal loop, thereby activating the enzyme. In terms of biological role, IMP-specific 5'-nucleotidase involved in IMP (inosine 5'-phosphate) degradation. In Saccharomyces cerevisiae (strain ATCC 204508 / S288c) (Baker's yeast), this protein is IMP-specific 5'-nucleotidase 1 (ISN1).